Consider the following 392-residue polypeptide: Serine protease ea (392 aa).

Residues 1-19 (MLKPSIICLFLGILAKSSA) form the signal peptide. Residues 20-127 (GQFYFPNEAA…GQCGNILSNR (108 aa)) constitute a propeptide, activation peptide. The Clip domain occupies 36 to 89 (RCITPNRERALCIHLEDCKYLYGLLTTTPLRDTDRLYLSRSQCGYTNGKVLICC). 3 cysteine pairs are disulfide-bonded: Cys37–Cys88, Cys47–Cys78, and Cys53–Cys89. A glycan (N-linked (GlcNAc...) asparagine) is linked at Asn107. Disulfide bonds link Cys120-Cys260, Cys158-Cys174, Cys202-Cys212, Cys307-Cys324, and Cys334-Cys367. The 264-residue stretch at 128–391 (IYGGMKTKID…YVDWIQNTIE (264 aa)) folds into the Peptidase S1 domain. His173 serves as the catalytic Charge relay system. Residues Glu193, Asp195, Thr198, and Asp201 each contribute to the Ca(2+) site. Asp240 serves as the catalytic Charge relay system. Ser338 acts as the Charge relay system in catalysis.

This sequence belongs to the peptidase S1 family. CLIP subfamily. In terms of assembly, interacts with Spn27A; the two proteins are covalently linked leading to inhibition of ea catalytic activity. Interacts (via Peptidase domain) with snk (via N-terminal prodomain); leads to proteolytic activation of ea by snk. Sulfation of a vitelline membrane component by pip is required for proteolytic cleavage of ea by snk but not for the interaction of ea with snk. Proteolytically cleaved by snk. Activation peptide and active catalytic domain remain associated by a disulfide bond. Processed ea/easter is present in extremely low amounts in the early embryo as it is rapidly converted into a high molecular mass complex made up of ea covalently bound to the serpin Spn27A. Zymogen activation is also controlled by a negative feedback loop from Dorsal.

It localises to the secreted. Activated proteolytically by snk; activation requires both activation of the ndl-gd-snk protease cascade and sulfation of a vitelline membrane component by pip. Inhibited by binding of the serpin Spn27A. Component of the extracellular signaling pathway that establishes the dorsal-ventral pathway of the embryo. A protease cascade involving ndl, gd, snk and ea results in activation of the spz Toll receptor ligand; acts downstream of ndl, gd and snk and is required for proteolytic processing of spz. Activation of ea requires both activation of the ndl-gd-snk protease cascade and sulfation of a vitelline membrane component by pip. Localized activation of the Toll receptor in the ventral region of the embryo defines cell identities along the dorsal-ventral continuum. The chain is Serine protease ea from Drosophila melanogaster (Fruit fly).